The chain runs to 377 residues: N5-carboxyaminoimidazole ribonucleotide synthase (377 aa).

ATP contacts are provided by residues R93, K133, 138–144 (GYDGRGQ), 175–178 (EEFV), E183, H206, and 257–258 (NE). One can recognise an ATP-grasp domain in the interval 97–287 (KTLLDHAGVR…QFENHLRAVC (191 aa)).

Belongs to the PurK/PurT family. As to quaternary structure, homodimer.

The catalysed reaction is 5-amino-1-(5-phospho-beta-D-ribosyl)imidazole + hydrogencarbonate + ATP = 5-carboxyamino-1-(5-phospho-D-ribosyl)imidazole + ADP + phosphate + 2 H(+). It functions in the pathway purine metabolism; IMP biosynthesis via de novo pathway; 5-amino-1-(5-phospho-D-ribosyl)imidazole-4-carboxylate from 5-amino-1-(5-phospho-D-ribosyl)imidazole (N5-CAIR route): step 1/2. Functionally, catalyzes the ATP-dependent conversion of 5-aminoimidazole ribonucleotide (AIR) and HCO(3)(-) to N5-carboxyaminoimidazole ribonucleotide (N5-CAIR). In Vibrio vulnificus (strain YJ016), this protein is N5-carboxyaminoimidazole ribonucleotide synthase.